Reading from the N-terminus, the 121-residue chain is Small ribosomal subunit protein uS13 (121 aa).

The disordered stretch occupies residues 93 to 121; sequence RNLPVRGQRTRTNARTCKGPRKSMNKQFK. The segment covering 110–121 has biased composition (basic residues); sequence KGPRKSMNKQFK.

Belongs to the universal ribosomal protein uS13 family. Part of the 30S ribosomal subunit. Forms a loose heterodimer with protein S19. Forms two bridges to the 50S subunit in the 70S ribosome.

Its function is as follows. Located at the top of the head of the 30S subunit, it contacts several helices of the 16S rRNA. In the 70S ribosome it contacts the 23S rRNA (bridge B1a) and protein L5 of the 50S subunit (bridge B1b), connecting the 2 subunits; these bridges are implicated in subunit movement. Contacts the tRNAs in the A and P-sites. This is Small ribosomal subunit protein uS13 from Blochmanniella pennsylvanica (strain BPEN).